Here is a 296-residue protein sequence, read N- to C-terminus: (+)-neomenthol dehydrogenase (296 aa).

16–40 (RGIGFEICRQLASEGIRVVLTSRDE) serves as a coordination point for NADP(+). Position 164 (S164) interacts with substrate. Residue Y220 is the Proton acceptor of the active site.

This sequence belongs to the short-chain dehydrogenases/reductases (SDR) family. Monomer.

The protein resides in the cytoplasm. It carries out the reaction (+)-neomenthol + NADP(+) = (1R,4S)-menthone + NADPH + H(+). Aldehyde reductase that catalyzes the reduction of the aldehyde carbonyl groups on saturated and alpha,beta-unsaturated aldehydes with more than 5 carbons. Involved in basal resistance against pathogens. In Arabidopsis thaliana (Mouse-ear cress), this protein is (+)-neomenthol dehydrogenase (SDR1).